The chain runs to 156 residues: Low molecular weight phosphotyrosine protein phosphatase (156 aa).

Cys11 functions as the Nucleophile in the catalytic mechanism. Residue Arg17 is part of the active site. The active-site Proton donor is Asp128.

The protein belongs to the low molecular weight phosphotyrosine protein phosphatase family.

The protein localises to the cytoplasm. The enzyme catalyses O-phospho-L-tyrosyl-[protein] + H2O = L-tyrosyl-[protein] + phosphate. It catalyses the reaction a phosphate monoester + H2O = an alcohol + phosphate. Its function is as follows. May contribute to dephosphorylation of 'Tyr-15' of cdc2. The sequence is that of Low molecular weight phosphotyrosine protein phosphatase (stp1) from Schizosaccharomyces pombe (strain 972 / ATCC 24843) (Fission yeast).